The sequence spans 493 residues: Glutamyl-tRNA(Gln) amidotransferase subunit A (493 aa).

Active-site charge relay system residues include Lys79 and Ser159. Catalysis depends on Ser183, which acts as the Acyl-ester intermediate.

The protein belongs to the amidase family. GatA subfamily. Heterotrimer of A, B and C subunits.

The enzyme catalyses L-glutamyl-tRNA(Gln) + L-glutamine + ATP + H2O = L-glutaminyl-tRNA(Gln) + L-glutamate + ADP + phosphate + H(+). Functionally, allows the formation of correctly charged Gln-tRNA(Gln) through the transamidation of misacylated Glu-tRNA(Gln) in organisms which lack glutaminyl-tRNA synthetase. The reaction takes place in the presence of glutamine and ATP through an activated gamma-phospho-Glu-tRNA(Gln). This Brucella canis (strain ATCC 23365 / NCTC 10854 / RM-666) protein is Glutamyl-tRNA(Gln) amidotransferase subunit A.